We begin with the raw amino-acid sequence, 1023 residues long: MGKGVGRDKYEPAAVSEQGDKKGKKGKKDRDMDELKKEVSMDDHKLSLDELHRKYGTDLSRGLTSARAAEILARDGPNALTPPPTTPEWIKFCRQLFGGFSMLLWIGAILCFLAYSIQAATEEEPQNDNLYLGVVLSAVVIITGCFSYYQEAKSSKIMESFKNMVPQQALVIRNGEKMSINAEEVVVGDLVEVKGGDRIPADLRIISANGCKVDNSSLTGESEPQTRSPDFTNENPLETRNIAFFSTNCVEGTARGIVVYTGDRTVMGRIATLASGLEGGQTPIAAEIEHFIHIITGVAVFLGVSFFILSLILEYTWLEAVIFLIGIIVANVPEGLLATVTVCLTLTAKRMARKNCLVKNLEAVETLGSTSTICSDKTGTLTQNRMTVAHMWFDNQIHEADTTENQSGVSFDKTSATWLALSRIAGLCNRAVFQANQENLPILKRAVAGDASESALLKCIELCCGSVKEMRERYAKIVEIPFNSTNKYQLSIHKNPNTSEPQHLLVMKGAPERILDRCSSILLHGKEQPLDEELKDAFQNAYLELGGLGERVLGFCHLFLPDEQFPEGFQFDTDDVNFPIDNLCFVGLISMIDPPRAAVPDAVGKCRSAGIKVIMVTGDHPITAKAIAKGVGIISEGNETVEDIAARLNIPVSQVNPRDAKACVVHGSDLKDMTSEQLDDILKYHTEIVFARTSPQQKLIIVEGCQRQGAIVAVTGDGVNDSPALKKADIGVAMGIAGSDVSKQAADMILLDDNFASIVTGVEEGRLIFDNLKKSIAYTLTSNIPEITPFLIFIIANIPLPLGTVTILCIDLGTDMVPAISLAYEQAESDIMKRQPRNPKTDKLVNERLISMAYGQIGMIQALGGFFTYFVILAENGFLPIHLLGLRVDWDDRWINDVEDSYGQQWTYEQRKIVEFTCHTAFFVSIVVVQWADLVICKTRRNSVFQQGMKNKILIFGLFEETALAAFLSYCPGMGVALRMYPLKPTWWFCAFPYSLLIFVYDEVRKLIIRRRPGGWVEKETYY.

Positions 1-5 are excised as a propeptide; that stretch reads MGKGV. Residues 1–11 show a composition bias toward basic and acidic residues; sequence MGKGVGRDKYE. The interval 1-39 is disordered; that stretch reads MGKGVGRDKYEPAAVSEQGDKKGKKGKKDRDMDELKKEV. The Cytoplasmic segment spans residues 6-87; it reads GRDKYEPAAV…NALTPPPTTP (82 aa). The residue at position 9 (lysine 9) is an N6-acetyllysine. At tyrosine 10 the chain carries Phosphotyrosine. Serine 16 is subject to Phosphoserine. Lysine 21 is modified (N6-acetyllysine). A compositionally biased stretch (basic and acidic residues) spans 28–39; sequence KDRDMDELKKEV. A phosphoserine mark is found at serine 40 and serine 47. The interval 82–84 is phosphoinositide-3 kinase binding; that stretch reads PPP. A helical membrane pass occupies residues 88 to 108; that stretch reads EWIKFCRQLFGGFSMLLWIGA. Topologically, residues 109–131 are extracellular; sequence ILCFLAYSIQAATEEEPQNDNLY. The helical transmembrane segment at 132 to 152 threads the bilayer; the sequence is LGVVLSAVVIITGCFSYYQEA. Residues 153-288 lie on the Cytoplasmic side of the membrane; it reads KSSKIMESFK…GGQTPIAAEI (136 aa). Positions 216–235 are disordered; the sequence is SSLTGESEPQTRSPDFTNEN. Serine 228 is modified (phosphoserine). Tyrosine 260 bears the Phosphotyrosine mark. The helical transmembrane segment at 289 to 308 threads the bilayer; that stretch reads EHFIHIITGVAVFLGVSFFI. The Extracellular segment spans residues 309-320; sequence LSLILEYTWLEA. A helical transmembrane segment spans residues 321 to 338; the sequence is VIFLIGIIVANVPEGLLA. The Cytoplasmic segment spans residues 339-772; it reads TVTVCLTLTA…EEGRLIFDNL (434 aa). Aspartate 376 (4-aspartylphosphate intermediate) is an active-site residue. Phosphoserine is present on residues serine 452 and serine 484. Position 487 (lysine 487) interacts with ATP. Tyrosine 542 is subject to Phosphotyrosine. The tract at residues 596-717 is mediates interaction with SCN7A; that stretch reads RAAVPDAVGK…QGAIVAVTGD (122 aa). Lysine 661 carries the post-translational modification N6-succinyllysine. Residues serine 668 and serine 675 each carry the phosphoserine modification. Aspartate 717 and aspartate 721 together coordinate Mg(2+). The helical transmembrane segment at 773–792 threads the bilayer; sequence KKSIAYTLTSNIPEITPFLI. The Extracellular segment spans residues 793-802; the sequence is FIIANIPLPL. Residues 803 to 823 traverse the membrane as a helical segment; that stretch reads GTVTILCIDLGTDMVPAISLA. Topologically, residues 824–843 are cytoplasmic; that stretch reads YEQAESDIMKRQPRNPKTDK. A helical membrane pass occupies residues 844-866; that stretch reads LVNERLISMAYGQIGMIQALGGF. Residues 867–918 lie on the Extracellular side of the membrane; it reads FTYFVILAENGFLPIHLLGLRVDWDDRWINDVEDSYGQQWTYEQRKIVEFTC. A helical membrane pass occupies residues 919–938; it reads HTAFFVSIVVVQWADLVICK. The Cytoplasmic segment spans residues 939–951; sequence TRRNSVFQQGMKN. Serine 943 carries the phosphoserine; by PKA modification. Residues 952–970 traverse the membrane as a helical segment; that stretch reads KILIFGLFEETALAAFLSY. At 971-985 the chain is on the extracellular side; the sequence is CPGMGVALRMYPLKP. Residues 986 to 1006 traverse the membrane as a helical segment; sequence TWWFCAFPYSLLIFVYDEVRK. The Cytoplasmic segment spans residues 1007-1023; it reads LIIRRRPGGWVEKETYY.

The protein belongs to the cation transport ATPase (P-type) (TC 3.A.3) family. Type IIC subfamily. As to quaternary structure, the sodium/potassium-transporting ATPase is composed of a catalytic alpha subunit, an auxiliary non-catalytic beta subunit and an additional regulatory subunit. Interacts with regulatory subunit FXYD1. Interacts with regulatory subunit FXYD3. Interacts with SIK1. Binds the HLA class II histocompatibility antigen DR1. Interacts with SLC35G1 and STIM1. Interacts with CLN3; this interaction regulates the sodium/potassium-transporting ATPase complex localization at the plasma membrane. Interacts with SCN7A; activates ATP1A1 P-type sodium:potassium-exchanging transporter activity which indirectly signals to nearby neurons to regulate sodium homeostasis. In terms of processing, phosphorylation on Tyr-10 modulates pumping activity. Phosphorylation of Ser-943 by PKA modulates the response of ATP1A1 to PKC. Dephosphorylation by protein phosphatase 2A (PP2A) following increases in intracellular sodium, leading to increase catalytic activity.

The protein localises to the cell membrane. It localises to the basolateral cell membrane. Its subcellular location is the sarcolemma. It is found in the cell projection. The protein resides in the axon. The protein localises to the melanosome. It carries out the reaction K(+)(out) + Na(+)(in) + ATP + H2O = K(+)(in) + Na(+)(out) + ADP + phosphate + H(+). Functionally, this is the catalytic component of the active enzyme, which catalyzes the hydrolysis of ATP coupled with the exchange of sodium and potassium ions across the plasma membrane. This action creates the electrochemical gradient of sodium and potassium ions, providing the energy for active transport of various nutrients. Could also be part of an osmosensory signaling pathway that senses body-fluid sodium levels and controls salt intake behavior as well as voluntary water intake to regulate sodium homeostasis. The sequence is that of Sodium/potassium-transporting ATPase subunit alpha-1 (ATP1A1) from Homo sapiens (Human).